Here is a 352-residue protein sequence, read N- to C-terminus: Zinc finger CCCH domain-containing protein 42 (352 aa).

The region spanning 36 to 114 is the RRM domain; that stretch reads AYVYVGGIPF…RTIKVDHCGA (79 aa). C3H1-type zinc fingers lie at residues 130 to 157 and 180 to 207; these read REAR…HDEK and REGR…HDEK. Residues 156-179 are disordered; that stretch reads EKRAANTGWGHEEDRSSKWDHDKN. Basic and acidic residues-rich tracts occupy residues 210–230, 243–296, and 304–352; these read ATTG…DKLN, GDFK…RSGR, and RHND…DRRR. The segment at 210–352 is disordered; that stretch reads ATTGWGHEED…DSLRREDRRR (143 aa). A coiled-coil region spans residues 319-348; that stretch reads RAQDWEKRKAESRRDRNDREEKDRDSLRRE.

The protein is Zinc finger CCCH domain-containing protein 42 of Arabidopsis thaliana (Mouse-ear cress).